The following is a 724-amino-acid chain: Disks large homolog 4 (724 aa).

2 S-palmitoyl cysteine lipidation sites follow: C3 and C5. A disordered region spans residues 15–35 (QDEDTPPLEHSPAHLPNQANS). 2 consecutive PDZ domains span residues 65 to 151 (EITL…VMRR) and 160 to 246 (EIKL…VAKP). Residues S73 and S142 each carry the phosphoserine modification. Position 240 is a phosphotyrosine (Y240). Position 295 is a phosphoserine (S295). Residues 313 to 393 (RIVIHRGSTG…QTVTIIAQYK (81 aa)) form the PDZ 3 domain. Residues S415 and S418 each carry the phosphoserine modification. Residue T420 is modified to Phosphothreonine. S422, S425, S449, and S480 each carry phosphoserine. The SH3 domain occupies 428–498 (KRGFYIRALF…PSKRRVERRE (71 aa)). The Guanylate kinase-like domain occupies 534-709 (ARPIIILGPT…IYHKVKRVIE (176 aa)). Residue Y580 is modified to Phosphotyrosine. Phosphoserine occurs at positions 606 and 654. At Y715 the chain carries Phosphotyrosine.

This sequence belongs to the MAGUK family. Interacts through its PDZ domains with ANO2 and NETO1. Interacts with KCNJ4. Interacts through its first two PDZ domains with GRIN2A, GRIN2B, GRIN2C and GRIN2D. Interacts with ERBB4. Interacts with KCNA1, KCNA2, KCNA3 and KCNA4. Interacts with LRRC4 and LRRC4B. Interacts with SYNGAP1. Interacts with ASIC3. Interacts with SEMA4C. Interacts with CXADR. Interacts with KCND2. Interacts (via first PDZ domain) with CRIPT. Interacts through its first PDZ domain with GRIK2 and KCNA4. Interacts through its second PDZ domain with the PDZ domain of NOS1 or the C-terminus of CAPON. Interacts through its third PDZ domain with NLGN1 and CRIPT, and probably with NLGN2 and NLGN3. Interacts through its guanylate kinase-like domain with DLGAP1/GKAP, DLGAP2, DLGAP3, DLGAP4, MAP1A, BEGAIN and SIPA1L1. Interacts through its guanylate kinase-like domain with KIF13B. Isoform 2 interacts through an L27 domain with HGS/HRS and the first L27 domain of CASK. Interacts with ANKS1B. Interacts with ADR1B. May interact with HTR2A. Interacts with ADAM22, KLHL17 and LGI1. Interacts with FRMPD4 (via C-terminus). Interacts with LRFN1 and LRFN2. Interacts with LRFN4. Interacts (via N-terminal tandem pair of PDZ domains) with GPER1 (via C-terminus tail motif); the interaction is direct and induces the increase of GPER1 protein levels residing at the plasma membrane surface in a estradiol-independent manner. Interacts (via N-terminus tandem pair of PDZ domains) with NOS1 (via N-terminal domain). Interacts with SHANK3. Interacts with GPR85. Interacts with CACNG2 and MPP2 (via the SH3-Guanylate kinase-like sub-module). Interacts with ADGRB1. Found in a complex with PRR7 and GRIN1. Interacts (via PDZ3 domain and to lesser degree via PDZ2 domain) with PRR7. Component of the postsynaptic hippocampal AMPA-type glutamate receptor (AMPAR) complex, at least composed of pore forming AMPAR subunits GRIA1, GRIA2 and GRIA3 and AMPAR auxiliary proteins SHISA6 and SHISA7. Interacts (via its first two PDZ domains) with SHISA6 and SHISA7 (via PDZ-binding motif); the interaction is direct. Interacts (via PDZ domain 2) with SEMA4F (via PDZ-binding motif); this interaction may promote translocation of DLG4/SAP90 to the membrane. Interacts with RPH3A and GRIN2A; this ternary complex regulates NMDA receptor composition at postsynaptic membranes. Interacts with ABR and BCR. Interacts with DGKI (via PDZ-binding motif); controls the localization of DGKI to the synapse. Interacts with C9orf72, SMCR8 and RAB39B. Interacts with ZDHHC5. Interacts with PTEN (via PDZ domain-binding motif); the interaction is induced by NMDA and is required for PTEN location at postsynaptic density. Found in a complex with GRIA1, GRIA2, GRIA3, GRIA4, CACNG8 and CNIH2. Interacts with FAM81A; the interaction facilitates condensate formation via liquid-liquid phase separation. Interacts with ADGRL3. Interacts with SORCS3. Post-translationally, palmitoylated. Palmitoylation is required for targeting to postsynaptic density, plasma membrane and synapses. Palmitoylation by ZDHHC2 occurs when the synaptic activity decreases and induces DLG4 synaptic clustering. Palmitoylation by ZDHHC15 regulates trafficking to the postsynaptic density and function in synaptogenesis. Palmitoylation may play a role in glutamate receptor GRIA1 synapse clustering. Depalmitoylated by ABHD17A and ABHD17B and to a lesser extent by ABHD17C, ABHD12, ABHD13, LYPLA1 and LYPLA2. Undergoes rapid synaptic palmitoylation/depalmitoylation cycle during neuronal development which slows down in mature neurons. Ubiquitinated by MDM2 in response to NMDA receptor activation, leading to proteasome-mediated degradation of DLG4 which is required for AMPA receptor endocytosis. As to expression, expressed in brain (at protein level). Detected in juxtaparanodal zones in the central nervous system and at nerve terminal plexuses of basket cells in the cerebellum. Expressed in cerebrum. Expressed in hippocampal neurons (at protein level). Isoform 1 and isoform 2: highly expressed in cerebellum, cortex, hippocampus, and corpus striatum.

It localises to the cell membrane. The protein resides in the postsynaptic density. The protein localises to the synapse. It is found in the cytoplasm. Its subcellular location is the cell projection. It localises to the axon. The protein resides in the dendritic spine. The protein localises to the dendrite. It is found in the presynapse. Functionally, postsynaptic scaffolding protein that plays a critical role in synaptogenesis and synaptic plasticity by providing a platform for the postsynaptic clustering of crucial synaptic proteins. Interacts with the cytoplasmic tail of NMDA receptor subunits and shaker-type potassium channels. Required for synaptic plasticity associated with NMDA receptor signaling. Overexpression or depletion of DLG4 changes the ratio of excitatory to inhibitory synapses in hippocampal neurons. May reduce the amplitude of ASIC3 acid-evoked currents by retaining the channel intracellularly. May regulate the intracellular trafficking of ADR1B. Also regulates AMPA-type glutamate receptor (AMPAR) immobilization at postsynaptic density keeping the channels in an activated state in the presence of glutamate and preventing synaptic depression. Under basal conditions, cooperates with FYN to stabilize palmitoyltransferase ZDHHC5 at the synaptic membrane through FYN-mediated phosphorylation of ZDHHC5 and its subsequent inhibition of association with endocytic proteins. In Rattus norvegicus (Rat), this protein is Disks large homolog 4.